The sequence spans 807 residues: AP-5 complex subunit zeta-1 (807 aa).

As to quaternary structure, probably part of the adaptor protein complex 5 (AP-5) a tetramer composed of AP5B1, AP5M1, AP5S1 and AP5Z1. Interacts with ZFYVE26 and SPG11.

Its subcellular location is the cytoplasm. The protein localises to the nucleus. Functionally, as part of AP-5, a probable fifth adaptor protein complex it may be involved in endosomal transport. According to PubMed:20613862 it is a putative helicase required for efficient homologous recombination DNA double-strand break repair. The protein is AP-5 complex subunit zeta-1 (AP5Z1) of Homo sapiens (Human).